We begin with the raw amino-acid sequence, 160 residues long: Ribosomal RNA large subunit methyltransferase H (160 aa).

S-adenosyl-L-methionine contacts are provided by residues Leu77, Gly109, and 128–133 (FSRLTF).

Belongs to the RNA methyltransferase RlmH family. As to quaternary structure, homodimer.

It localises to the cytoplasm. The enzyme catalyses pseudouridine(1915) in 23S rRNA + S-adenosyl-L-methionine = N(3)-methylpseudouridine(1915) in 23S rRNA + S-adenosyl-L-homocysteine + H(+). Its function is as follows. Specifically methylates the pseudouridine at position 1915 (m3Psi1915) in 23S rRNA. This Desulfitobacterium hafniense (strain Y51) protein is Ribosomal RNA large subunit methyltransferase H.